A 151-amino-acid chain; its full sequence is Cytochrome c-type biogenesis protein CcmE 1 (151 aa).

At 1 to 8 (MNPLRKKR) the chain is on the cytoplasmic side. The helical; Signal-anchor for type II membrane protein transmembrane segment at 9–29 (LIIILAILVGVGAAVGLALSA) threads the bilayer. Over 30–151 (LQQNINLFYT…QSAPTPAKEG (122 aa)) the chain is Periplasmic. His-124 and Tyr-128 together coordinate heme. Residues 131–151 (PEVTKALKDSGQSAPTPAKEG) are disordered.

The protein belongs to the CcmE/CycJ family.

It localises to the cell inner membrane. Its function is as follows. Heme chaperone required for the biogenesis of c-type cytochromes. Transiently binds heme delivered by CcmC and transfers the heme to apo-cytochromes in a process facilitated by CcmF and CcmH. This chain is Cytochrome c-type biogenesis protein CcmE 1, found in Pseudomonas fluorescens (strain Pf0-1).